A 111-amino-acid chain; its full sequence is Large ribosomal subunit protein bL20c (111 aa).

The protein belongs to the bacterial ribosomal protein bL20 family.

The protein resides in the plastid. It is found in the chloroplast. Binds directly to 23S ribosomal RNA and is necessary for the in vitro assembly process of the 50S ribosomal subunit. It is not involved in the protein synthesizing functions of that subunit. In Ostreococcus tauri, this protein is Large ribosomal subunit protein bL20c.